We begin with the raw amino-acid sequence, 411 residues long: Imidazolonepropionase (411 aa).

Positions 78 and 80 each coordinate Fe(3+). Zn(2+) contacts are provided by histidine 78 and histidine 80. The 4-imidazolone-5-propanoate site is built by arginine 87, tyrosine 150, and histidine 183. Position 150 (tyrosine 150) interacts with N-formimidoyl-L-glutamate. Residue histidine 248 participates in Fe(3+) binding. Histidine 248 is a Zn(2+) binding site. Glutamine 251 provides a ligand contact to 4-imidazolone-5-propanoate. Aspartate 322 is a binding site for Fe(3+). Position 322 (aspartate 322) interacts with Zn(2+). Asparagine 324 and glycine 326 together coordinate N-formimidoyl-L-glutamate. Serine 327 lines the 4-imidazolone-5-propanoate pocket.

This sequence belongs to the metallo-dependent hydrolases superfamily. HutI family. Zn(2+) is required as a cofactor. Fe(3+) serves as cofactor.

The protein resides in the cytoplasm. It catalyses the reaction 4-imidazolone-5-propanoate + H2O = N-formimidoyl-L-glutamate. It functions in the pathway amino-acid degradation; L-histidine degradation into L-glutamate; N-formimidoyl-L-glutamate from L-histidine: step 3/3. Functionally, catalyzes the hydrolytic cleavage of the carbon-nitrogen bond in imidazolone-5-propanoate to yield N-formimidoyl-L-glutamate. It is the third step in the universal histidine degradation pathway. The chain is Imidazolonepropionase from Flavobacterium johnsoniae (strain ATCC 17061 / DSM 2064 / JCM 8514 / BCRC 14874 / CCUG 350202 / NBRC 14942 / NCIMB 11054 / UW101) (Cytophaga johnsonae).